The primary structure comprises 71 residues: Large ribosomal subunit protein bL31 (71 aa).

The Zn(2+) site is built by cysteine 16, cysteine 18, cysteine 38, and cysteine 41.

This sequence belongs to the bacterial ribosomal protein bL31 family. Type A subfamily. In terms of assembly, part of the 50S ribosomal subunit. Zn(2+) serves as cofactor.

Functionally, binds the 23S rRNA. This chain is Large ribosomal subunit protein bL31, found in Neisseria gonorrhoeae (strain ATCC 700825 / FA 1090).